Reading from the N-terminus, the 121-residue chain is MALDTANIIEQLKGASILELNDLVHAIEEEFGVTAAAPVAAAGAAGGAEEAKSSFDVELTSAGTEKVKVIKIVKEATGASLLDAKKTVDGAPVVLKEGLSEDEANELKAKLEEVGATVTLK.

Belongs to the bacterial ribosomal protein bL12 family. Homodimer. Part of the ribosomal stalk of the 50S ribosomal subunit. Forms a multimeric L10(L12)X complex, where L10 forms an elongated spine to which 2 to 4 L12 dimers bind in a sequential fashion. Binds GTP-bound translation factors.

Forms part of the ribosomal stalk which helps the ribosome interact with GTP-bound translation factors. Is thus essential for accurate translation. The sequence is that of Large ribosomal subunit protein bL12 from Lactobacillus delbrueckii subsp. bulgaricus (strain ATCC BAA-365 / Lb-18).